Consider the following 95-residue polypeptide: Large ribosomal subunit protein bL27 (95 aa).

Residues 1 to 6 constitute a propeptide that is removed on maturation; it reads MILQLF.

The protein belongs to the bacterial ribosomal protein bL27 family. The N-terminus is cleaved by ribosomal processing cysteine protease Prp.

The protein is Large ribosomal subunit protein bL27 of Caldanaerobacter subterraneus subsp. tengcongensis (strain DSM 15242 / JCM 11007 / NBRC 100824 / MB4) (Thermoanaerobacter tengcongensis).